The primary structure comprises 262 residues: CD99 antigen-like protein 2 (262 aa).

A signal peptide spans 1–25 (MVAWRSAFLVCLAFSLATLVQRGSG). At 26-185 (DFDDFNLEDA…PGSGMVAEPG (160 aa)) the chain is on the extracellular side. The disordered stretch occupies residues 38–181 (ETSSVKQPWD…SNDDPGSGMV (144 aa)). Low complexity-rich tracts occupy residues 49 to 60 (TTTTTTNRPGTT) and 98 to 119 (VTTT…GNDF). 2 stretches are compositionally biased toward basic and acidic residues: residues 125-136 (LDDRNDRDDGRR) and 159-168 (YKPDKGKGDG). Ser178 carries an O-linked (Xyl...) (chondroitin sulfate) serine glycan. The helical transmembrane segment at 186-206 (TIAGVASALAMALIGAVSSYI) threads the bilayer. The Cytoplasmic segment spans residues 207 to 262 (SYQQKKFCFSIQQGLNADYVKGENLEAVVCEEPQVKYSTLHTQSAEPPPPPEPARI).

It belongs to the CD99 family. O-glycosylated. Detected in cerebrospinal fluid (at protein level). Expressed in many tissues, with low expression in thymus.

The protein localises to the cell membrane. It is found in the cell junction. The protein resides in the secreted. Its function is as follows. Plays a role in a late step of leukocyte extravasation helping cells to overcome the endothelial basement membrane. Acts at the same site as, but independently of, PECAM1. Homophilic adhesion molecule, but these interactions may not be required for cell aggregation. This is CD99 antigen-like protein 2 (CD99L2) from Homo sapiens (Human).